A 1503-amino-acid chain; its full sequence is Mitogen-activated protein kinase-binding protein 1 (1503 aa).

WD repeat units follow at residues 89 to 130 (SSRK…QVAE), 133 to 174 (EHKY…VVAS), 176 to 214 (KVSSRVTAVSFSEDCSYFVTAGNRHIKFWYLDDSKTSKV), 271 to 310 (VELRTTVAHCISVTQEYIFCGCADGTVRLFNPSNLHFLST), 337 to 376 (ARYPDTIALTFDPTNQWLSCVYNDHSIYVWDVRDPKKVGK), 382 to 431 (YHSS…VHGS), 472 to 511 (DPRVGIRSVCISPNGQHLASGDRMGTLRIHELQSLSEMLK), 514 to 556 (AHDS…SLQQ), 560 to 601 (EHSS…EGVQ), 609 to 648 (VRKTTLYDMDVEPSWKYTAIGCQDRNIRIFNISSGKQKKL), 654 to 693 (GEDGTLIKVQTDPSGIYIATSCSDKNLSIFDFSSGECVAT), and 696 to 735 (GHSEIVTGMKFSNDCKHLISVSGDSCIFVWRLSSEMTISM). Disordered stretches follow at residues 745 to 817 (RQRG…SSPA), 874 to 917 (LAPS…RLQT), and 951 to 1176 (VYPE…SWAS). Over residues 784–796 (KEGEDEGTEEEEL) the composition is skewed to acidic residues. Composition is skewed to polar residues over residues 905-917 (CVSQNERAPRLQT) and 957-972 (DSPTMDTSAFQVQAPT). Residues 1028–1043 (DLEEPAEGDEDEEEEG) show a composition bias toward acidic residues. Over residues 1058–1068 (PDQEQFLKQHF) the composition is skewed to basic and acidic residues. Over residues 1089 to 1129 (SQSISSRFLLQVQTSPLREPSLSSSGLALTSRPDQVSQVSG) the composition is skewed to polar residues. Residue serine 1193 is modified to Phosphoserine. 2 disordered regions span residues 1217–1238 (QGSLGSLPQAGGCSSQPHSYQN) and 1369–1391 (QGPESLQPLSPEKTRNPVESSRP).

Can form homodimers (via C-terminus). Interacts (via C-terminus) with WDR62 (via C-terminus). Interacts with MAPK9. Interacts (via N-terminus) with NOD2; the interaction is enhanced in presence of muramyl dipeptide (MDP). Interacts with MAPK10. In terms of tissue distribution, ubiquitously expressed. Highest expression observed in brain.

It localises to the cytoplasm. It is found in the nucleus. The protein resides in the cytoskeleton. The protein localises to the spindle pole. Its function is as follows. Negative regulator of NOD2 function. It down-regulates NOD2-induced processes such as activation of NF-kappa-B signaling, IL8 secretion and antibacterial response. Involved in JNK signaling pathway. The chain is Mitogen-activated protein kinase-binding protein 1 (Mapkbp1) from Mus musculus (Mouse).